A 299-amino-acid polypeptide reads, in one-letter code: Transcription factor BHLH148 (299 aa).

The interval arginine 90–serine 127 is disordered. The span at glutamate 102–glutamate 111 shows a compositional bias: acidic residues. The interval serine 127–arginine 140 is basic motif; degenerate. The region spanning serine 127–leucine 176 is the bHLH domain. The tract at residues glutamate 141 to leucine 176 is helix-loop-helix motif. A disordered region spans residues glutamate 273 to phenylalanine 299. Polar residues predominate over residues glycine 288 to phenylalanine 299.

Belongs to the bHLH protein family. Interacts with TIFY10A/JAZ6, TIFY10B/JAZ7, TIFY11A/JAZ9, TIFY11C/JAZ11, and TIFY11D/JAZ12.

It localises to the nucleus. Functionally, may act on an initial response of jasmonate-regulated gene expression toward drought tolerance as part of a BHLH148-TIFY11D/JAZ12-COI1A complex. The sequence is that of Transcription factor BHLH148 from Oryza sativa subsp. japonica (Rice).